The chain runs to 137 residues: Ribonuclease P protein component (137 aa).

It belongs to the RnpA family. As to quaternary structure, consists of a catalytic RNA component (M1 or rnpB) and a protein subunit.

The enzyme catalyses Endonucleolytic cleavage of RNA, removing 5'-extranucleotides from tRNA precursor.. In terms of biological role, RNaseP catalyzes the removal of the 5'-leader sequence from pre-tRNA to produce the mature 5'-terminus. It can also cleave other RNA substrates such as 4.5S RNA. The protein component plays an auxiliary but essential role in vivo by binding to the 5'-leader sequence and broadening the substrate specificity of the ribozyme. The polypeptide is Ribonuclease P protein component (Porphyromonas gingivalis (strain ATCC 33277 / DSM 20709 / CIP 103683 / JCM 12257 / NCTC 11834 / 2561)).